The sequence spans 305 residues: Aspartate carbamoyltransferase catalytic subunit (305 aa).

Carbamoyl phosphate-binding residues include arginine 54 and threonine 55. Lysine 83 is an L-aspartate binding site. Carbamoyl phosphate contacts are provided by arginine 104, histidine 132, and glutamine 135. L-aspartate contacts are provided by arginine 165 and arginine 226. 2 residues coordinate carbamoyl phosphate: leucine 265 and proline 266.

The protein belongs to the aspartate/ornithine carbamoyltransferase superfamily. ATCase family. Heterooligomer of catalytic and regulatory chains.

The enzyme catalyses carbamoyl phosphate + L-aspartate = N-carbamoyl-L-aspartate + phosphate + H(+). Its pathway is pyrimidine metabolism; UMP biosynthesis via de novo pathway; (S)-dihydroorotate from bicarbonate: step 2/3. Functionally, catalyzes the condensation of carbamoyl phosphate and aspartate to form carbamoyl aspartate and inorganic phosphate, the committed step in the de novo pyrimidine nucleotide biosynthesis pathway. In Pyrobaculum arsenaticum (strain DSM 13514 / JCM 11321 / PZ6), this protein is Aspartate carbamoyltransferase catalytic subunit.